Here is a 772-residue protein sequence, read N- to C-terminus: Probable adenosine deaminase (772 aa).

Zn(2+) is bound by residues histidine 22 and histidine 24. Substrate-binding residues include histidine 24, aspartate 26, and glycine 180. A Zn(2+)-binding site is contributed by histidine 207. Glutamate 210 acts as the Proton donor in catalysis. Aspartate 288 is a binding site for Zn(2+).

This sequence belongs to the metallo-dependent hydrolases superfamily. Adenosine and AMP deaminases family. It depends on Zn(2+) as a cofactor.

It catalyses the reaction adenosine + H2O + H(+) = inosine + NH4(+). Functionally, catalyzes the hydrolytic deamination of adenosine. Plays an important role in purine metabolism and in adenosine homeostasis, and may thereby contribute to cellular signaling events. This chain is Probable adenosine deaminase (ada), found in Dictyostelium discoideum (Social amoeba).